We begin with the raw amino-acid sequence, 417 residues long: Squamosa promoter-binding-like protein 14 (417 aa).

2 stretches are compositionally biased toward gly residues: residues 1-26 (MEMA…GGGG) and 51-60 (AGGGGTGSGS). 2 disordered regions span residues 1–32 (MEMA…EHRQ) and 51–102 (AGGG…PPPP). Residues 61 to 74 (GSASAAPPSSSSKA) are compositionally biased toward low complexity. Residues 75 to 84 (AGGGRGGGGK) are compositionally biased toward gly residues. The SBP-type zinc finger occupies 101 to 178 (PPRCQVEGCG…AGHNERRRRP (78 aa)). Residues C104, C109, C126, H129, C145, C148, and H152 each coordinate Zn(2+). The short motif at 161–177 (KRSCRRRLAGHNERRRR) is the Bipartite nuclear localization signal element. A Phosphoserine modification is found at S163. Position 164 (C164) interacts with Zn(2+). The disordered stretch occupies residues 387-417 (LQGNGPAPAPRIDPGSGSTFDQTSNTMDWSL). Positions 402 to 417 (SGSTFDQTSNTMDWSL) are enriched in polar residues.

As to quaternary structure, interacts with PCF1 and PCF2. Interacts with IPI1. Interacts with D53. Interacts with SLR1. Interacts (via C-terminus) with SHI1. Phosphorylated at Ser-163 in response to infection by the fungal pathogen Magnaporthe oryzae. In terms of processing, ubiquitinated by IPI1, which leads to proteasomal degradation. In terms of tissue distribution, expressed in young panicles. Expressed in the shoot apex at both the vegetative and reproductive stages. Highly expressed in the promordia of primary and secondary branches. Highly expressed in young panicles.

The protein localises to the nucleus. Functionally, transcriptional activator that binds to the SBP-box DNA core binding motif 5'-GTAC-3'. Can target the TCP motif 5'-TGGGCC/T-3' through interaction with PCF1 and PCF2. Key regulator of the plant architecture that controls shoot branching and panicle development. Promotes panicle branching. Promotes high grain yield. Binds to the promoters of TB1 and DEP1. Suppresses rice tillering mainly through positive regulation of TB1. Regulates plant height and panicle length through positive regulation of DEP1. Repressed by D53 in strigolactone (SL) signaling. Acts with D53 to mediate the SL-regulated tiller development. Functions as a direct downstream component of D53 in regulating tiller number and SL-induced gene expression. Binds directly to the D53 promoter and plays a critical role in the negative feedback regulation of SL-induced D53 expression. Involved in defense response against pathogens. Phosphorylated at Ser-163 in response to infection by the fungal pathogen Magnaporthe oryzae. Phosphorylation reduces SPL14/IPA1 binding to the GTAC site in the DEP1 promoter and enhances binding to the TGGGCC site in the WRKY45 promoter. Binding to the promoter of the pathogen defense gene WRKY45 activates its expression, leading to enhanced disease resistance. Reduces gibberellin-mediated disease susceptibility by stabilizing SLR1. Possesses transactivation activity in yeast cells. The sequence is that of Squamosa promoter-binding-like protein 14 from Oryza sativa subsp. japonica (Rice).